We begin with the raw amino-acid sequence, 145 residues long: Ribosomal RNA large subunit methyltransferase H (145 aa).

Residues leucine 68, glycine 95, and 113–118 contribute to the S-adenosyl-L-methionine site; that span reads FSKMTF.

This sequence belongs to the RNA methyltransferase RlmH family. As to quaternary structure, homodimer.

It localises to the cytoplasm. The enzyme catalyses pseudouridine(1915) in 23S rRNA + S-adenosyl-L-methionine = N(3)-methylpseudouridine(1915) in 23S rRNA + S-adenosyl-L-homocysteine + H(+). In terms of biological role, specifically methylates the pseudouridine at position 1915 (m3Psi1915) in 23S rRNA. The protein is Ribosomal RNA large subunit methyltransferase H of Mycoplasmopsis pulmonis (strain UAB CTIP) (Mycoplasma pulmonis).